The following is a 185-amino-acid chain: Elongation factor P (185 aa).

It belongs to the elongation factor P family.

It localises to the cytoplasm. The protein operates within protein biosynthesis; polypeptide chain elongation. In terms of biological role, involved in peptide bond synthesis. Stimulates efficient translation and peptide-bond synthesis on native or reconstituted 70S ribosomes in vitro. Probably functions indirectly by altering the affinity of the ribosome for aminoacyl-tRNA, thus increasing their reactivity as acceptors for peptidyl transferase. In Burkholderia lata (strain ATCC 17760 / DSM 23089 / LMG 22485 / NCIMB 9086 / R18194 / 383), this protein is Elongation factor P.